The chain runs to 396 residues: Elongation factor Tu 2 (396 aa).

One can recognise a tr-type G domain in the interval 10–206 (KPHVNVGTIG…TLDTYIPEPE (197 aa)). Residues 19–26 (GHVDHGKT) form a G1 region. Residue 19-26 (GHVDHGKT) participates in GTP binding. Position 26 (Thr-26) interacts with Mg(2+). The interval 60–64 (GITIN) is G2. The interval 81 to 84 (DCPG) is G3. GTP-binding positions include 81–85 (DCPGH) and 136–139 (NKCD). The tract at residues 136-139 (NKCD) is G4. The G5 stretch occupies residues 174-176 (SAL).

It belongs to the TRAFAC class translation factor GTPase superfamily. Classic translation factor GTPase family. EF-Tu/EF-1A subfamily. Monomer.

The protein localises to the cytoplasm. It catalyses the reaction GTP + H2O = GDP + phosphate + H(+). Functionally, GTP hydrolase that promotes the GTP-dependent binding of aminoacyl-tRNA to the A-site of ribosomes during protein biosynthesis. This is Elongation factor Tu 2 from Psychrobacter sp. (strain PRwf-1).